The chain runs to 141 residues: Hemoglobin subunit zeta (141 aa).

Position 1 is an N-acetylserine (Ser1). The Globin domain maps to 1–141 (SLTKAERTII…VSGVLTEKYR (141 aa)). Thr28 is subject to Phosphothreonine. Ser52 is modified (phosphoserine). Residue His58 participates in heme b binding. At Ser72 the chain carries Phosphoserine. Heme b is bound at residue His87.

The protein belongs to the globin family. In terms of assembly, heterotetramer of two zeta chains and two epsilon chains.

Its function is as follows. The zeta chain is an alpha-type chain of mammalian embryonic hemoglobin. The sequence is that of Hemoglobin subunit zeta from Sus scrofa (Pig).